The following is a 548-amino-acid chain: Chaperonin GroEL (548 aa).

Residues 30-33, lysine 51, 87-91, glycine 415, 479-481, and aspartate 495 each bind ATP; these read TLGP, DGTTT, and NAA.

The protein belongs to the chaperonin (HSP60) family. Forms a cylinder of 14 subunits composed of two heptameric rings stacked back-to-back. Interacts with the co-chaperonin GroES.

The protein resides in the cytoplasm. It catalyses the reaction ATP + H2O + a folded polypeptide = ADP + phosphate + an unfolded polypeptide.. In terms of biological role, together with its co-chaperonin GroES, plays an essential role in assisting protein folding. The GroEL-GroES system forms a nano-cage that allows encapsulation of the non-native substrate proteins and provides a physical environment optimized to promote and accelerate protein folding. This is Chaperonin GroEL from Pseudomonas fluorescens (strain SBW25).